A 356-amino-acid polypeptide reads, in one-letter code: Neurogenic differentiation factor 1 (356 aa).

The tract at residues Met-1–Ala-94 is disordered. Residues Glu-58–Asp-78 are compositionally biased toward acidic residues. Residues Pro-81 to Lys-93 are compositionally biased toward basic residues. Residues Lys-87 to Lys-93 carry the Nuclear localization signal motif. The bHLH domain maps to Leu-101–Leu-153. A phosphoserine mark is found at Ser-162, Ser-259, Ser-266, and Ser-274. A Phosphoserine; by CaMK2 modification is found at Ser-335.

As to quaternary structure, efficient DNA-binding requires dimerization with another bHLH protein. Heterodimer with TCF3/E47; the heterodimer is inhibited in presence of ID2, but not NR0B2, to E-box element. Interacts with EP300; the interaction is inhibited by NR0B2. Interacts with RREB1. Interacts with ATOH8. Post-translationally, phosphorylated. In islet cells, phosphorylated on Ser-274 upon glucose stimulation; which may be required for nuclear localization. In activated neurons, phosphorylated on Ser-335; which promotes dendritic growth. Phosphorylated by MAPK1; phosphorylation regulates heterodimerization and DNA-binding activities. Phosphorylation on Ser-266 and Ser-274 increases transactivation on the insulin promoter in glucose-stimulated insulinoma cells.

Its subcellular location is the cytoplasm. The protein resides in the nucleus. Acts as a transcriptional activator: mediates transcriptional activation by binding to E box-containing promoter consensus core sequences 5'-CANNTG-3'. Associates with the p300/CBP transcription coactivator complex to stimulate transcription of the secretin gene as well as the gene encoding the cyclin-dependent kinase inhibitor CDKN1A. Contributes to the regulation of several cell differentiation pathways, like those that promote the formation of early retinal ganglion cells, inner ear sensory neurons, granule cells forming either the cerebellum or the dentate gyrus cell layer of the hippocampus, endocrine islet cells of the pancreas and enteroendocrine cells of the small intestine. Together with PAX6 or SIX3, is required for the regulation of amacrine cell fate specification. Also required for dendrite morphogenesis and maintenance in the cerebellar cortex. Associates with chromatin to enhancer regulatory elements in genes encoding key transcriptional regulators of neurogenesis. The protein is Neurogenic differentiation factor 1 (NEUROD1) of Homo sapiens (Human).